The chain runs to 234 residues: LexA repressor (234 aa).

The segment at residues 41-61 (RAEIAAELGFRSPNAAEEHLK) is a DNA-binding region (H-T-H motif). Catalysis depends on for autocatalytic cleavage activity residues Ser-152 and Lys-189.

It belongs to the peptidase S24 family. Homodimer.

It catalyses the reaction Hydrolysis of Ala-|-Gly bond in repressor LexA.. Represses a number of genes involved in the response to DNA damage (SOS response), including recA and lexA. In the presence of single-stranded DNA, RecA interacts with LexA causing an autocatalytic cleavage which disrupts the DNA-binding part of LexA, leading to derepression of the SOS regulon and eventually DNA repair. The polypeptide is LexA repressor (Polaromonas naphthalenivorans (strain CJ2)).